The chain runs to 214 residues: Protein get-1 (214 aa).

Residues 1-4 lie on the Lumenal side of the membrane; sequence MPSL. The chain crosses the membrane as a helical span at residues 5–24; that stretch reads LVVIFVIELFVQLVNTIGAA. Over 25–110 the chain is Cytoplasmic; it reads TINNLLWRIA…KFDRTLTTVR (86 aa). A coiled-coil region spans residues 73–107; it reads KWARLRRQHDKLLEDLEKRKKELDAAKTKFDRTLT. The chain crosses the membrane as a helical span at residues 111-131; sequence VVATRGLQWFLPFWYSREPMF. Topologically, residues 132 to 155 are lumenal; sequence WLPYGWFPYYVEWFASFPRAPLGS. The chain crosses the membrane as a helical span at residues 156–172; the sequence is VSIVVWQWACTGVIKLV. The Cytoplasmic segment spans residues 173-214; sequence IETVMAVVGLIVAARQKQQEKQKAKQAVPAAGGGDSKAEEAK. Positions 190 to 214 are disordered; it reads QQEKQKAKQAVPAAGGGDSKAEEAK.

This sequence belongs to the WRB/GET1 family. In terms of assembly, interacts with GET3.

The protein localises to the endoplasmic reticulum membrane. Its function is as follows. Required for the post-translational delivery of tail-anchored (TA) proteins to the endoplasmic reticulum. Acts as a membrane receptor for soluble GET3, which recognizes and selectively binds the transmembrane domain of TA proteins in the cytosol. This is Protein get-1 (get-1) from Neurospora crassa (strain ATCC 24698 / 74-OR23-1A / CBS 708.71 / DSM 1257 / FGSC 987).